The primary structure comprises 156 residues: Cyanate hydratase (156 aa).

Catalysis depends on residues arginine 96, glutamate 99, and serine 122.

The protein belongs to the cyanase family.

It catalyses the reaction cyanate + hydrogencarbonate + 3 H(+) = NH4(+) + 2 CO2. Functionally, catalyzes the reaction of cyanate with bicarbonate to produce ammonia and carbon dioxide. In Pseudomonas fluorescens (strain ATCC BAA-477 / NRRL B-23932 / Pf-5), this protein is Cyanate hydratase.